The sequence spans 94 residues: uncharacterized protein (94 aa).

The protein to M.tuberculosis Rv2632c.

This is an uncharacterized protein from Mycobacterium tuberculosis (strain CDC 1551 / Oshkosh).